A 187-amino-acid chain; its full sequence is DNA-3-methyladenine glycosylase 1 (187 aa).

Residues Cys4, His17, His175, and Cys179 each contribute to the Zn(2+) site.

It catalyses the reaction Hydrolysis of alkylated DNA, releasing 3-methyladenine.. Its activity is regulated as follows. Activity is controlled by product inhibition. Its function is as follows. Hydrolysis of the deoxyribose N-glycosidic bond to excise 3-methyladenine from the damaged DNA polymer formed by alkylation lesions. This chain is DNA-3-methyladenine glycosylase 1, found in Escherichia coli (strain K12).